The primary structure comprises 483 residues: Altronate oxidoreductase (483 aa).

18–29 (IIQFGEGNFLRA) contacts NAD(+).

Belongs to the mannitol dehydrogenase family. UxaB subfamily.

It carries out the reaction D-altronate + NAD(+) = keto-D-tagaturonate + NADH + H(+). It participates in carbohydrate metabolism; pentose and glucuronate interconversion. The chain is Altronate oxidoreductase from Escherichia coli O17:K52:H18 (strain UMN026 / ExPEC).